The following is a 314-amino-acid chain: MENNTEVTEFILVGLTDDPELQIPLFIVFLFIYLITLVGNLGMIELILLDSCLHTPMYFFLSNLSLVDFGYSSAVTPKVMVGFLTGDKFILYNACATQFFFFVAFITAESFLLASMAYDRYAALCKPLHYTTTMTTNVCACLAIGSYICGFLNASIHTGNTFRLSFCRSNVVEHFFCDAPPLLTLSCSDNYISEMVIFFVVGFNDLFSILVILISYLFIFITIMKMRSPEGRQKAFSTCASHLTAVSIFYGTGIFMYLRPNSSHFMGTDKMASVFYAIVIPMLNPLVYSLRNKEVKSAFKKTVGKAKASIGFIF.

Over 1 to 23 the chain is Extracellular; the sequence is MENNTEVTEFILVGLTDDPELQI. N-linked (GlcNAc...) asparagine glycosylation occurs at Asn3. Residues 24-44 traverse the membrane as a helical segment; sequence PLFIVFLFIYLITLVGNLGMI. The Cytoplasmic portion of the chain corresponds to 45–52; that stretch reads ELILLDSC. The chain crosses the membrane as a helical span at residues 53-73; the sequence is LHTPMYFFLSNLSLVDFGYSS. Residues 74 to 97 are Extracellular-facing; sequence AVTPKVMVGFLTGDKFILYNACAT. Cys95 and Cys187 are joined by a disulfide. The chain crosses the membrane as a helical span at residues 98 to 118; it reads QFFFFVAFITAESFLLASMAY. Residues 119-137 are Cytoplasmic-facing; it reads DRYAALCKPLHYTTTMTTN. A helical membrane pass occupies residues 138 to 158; it reads VCACLAIGSYICGFLNASIHT. Over 159–194 the chain is Extracellular; sequence GNTFRLSFCRSNVVEHFFCDAPPLLTLSCSDNYISE. A helical transmembrane segment spans residues 195-215; the sequence is MVIFFVVGFNDLFSILVILIS. Over 216–235 the chain is Cytoplasmic; it reads YLFIFITIMKMRSPEGRQKA. The chain crosses the membrane as a helical span at residues 236 to 256; the sequence is FSTCASHLTAVSIFYGTGIFM. Over 257-269 the chain is Extracellular; sequence YLRPNSSHFMGTD. N-linked (GlcNAc...) asparagine glycosylation is present at Asn261. The helical transmembrane segment at 270–290 threads the bilayer; that stretch reads KMASVFYAIVIPMLNPLVYSL. Residues 291-314 are Cytoplasmic-facing; that stretch reads RNKEVKSAFKKTVGKAKASIGFIF.

It belongs to the G-protein coupled receptor 1 family.

It localises to the cell membrane. Functionally, odorant receptor. This Homo sapiens (Human) protein is Olfactory receptor 5B12 (OR5B12).